A 222-amino-acid chain; its full sequence is Prolactin-3B1 (222 aa).

Positions 1–31 (MKLSLSQPCSFSGALLLLAVSNLLVWEKVTS) are cleaved as a signal peptide. 2 disulfides stabilise this stretch: Cys82–Cys197 and Cys214–Cys222.

This sequence belongs to the somatotropin/prolactin family.

Its subcellular location is the secreted. The polypeptide is Prolactin-3B1 (Prl3b1) (Mus musculus (Mouse)).